Reading from the N-terminus, the 403-residue chain is MTESTFPQYPRLVLSKGREKSLLRRHPWVFSGAVSRLEGKANLGETIDIVDHQGKWLARGAWSPASQIRARVWTFDKAESIDIAFFTHRLRQAQQWRDWLAKKDGLDSYRLIAGESDGLPGVTIDRFGHFLVLQLLSAGAEYQRAALISALQTCDPDCAIYDRSDVAVRKKEGMALTQGPVTGELPPALLPIEEHGMKLLVDIQGGHKTGYYLDQRDSRLATRRYVENQRVLNCFSYTGGFAVSALMGGCRQVVSVDTSQDALDIARQNVELNQLDLSKAEFVRDDVFKLLRAYREHGEKFDVIIMDPPKFVENKSQLMGACRGYKDINMLAIQLLNPGGILLTFSCSGLMTSDLFQKIIADAAIDAGRDVQFIEQFRQAADHPVIATYPEGLYLKGFACRVM.

The 78-residue stretch at Tyr9–Phe86 folds into the PUA domain.

The protein belongs to the methyltransferase superfamily. RlmI family.

The protein localises to the cytoplasm. The catalysed reaction is cytidine(1962) in 23S rRNA + S-adenosyl-L-methionine = 5-methylcytidine(1962) in 23S rRNA + S-adenosyl-L-homocysteine + H(+). Functionally, specifically methylates the cytosine at position 1962 (m5C1962) of 23S rRNA. In Salmonella gallinarum (strain 287/91 / NCTC 13346), this protein is Ribosomal RNA large subunit methyltransferase I.